We begin with the raw amino-acid sequence, 257 residues long: Isoprenyl transferase (257 aa).

Aspartate 33 is a catalytic residue. Aspartate 33 serves as a coordination point for Mg(2+). Residues 34–37 (GNGR), tryptophan 38, arginine 46, histidine 50, and 78–80 (STE) contribute to the substrate site. Asparagine 81 functions as the Proton acceptor in the catalytic mechanism. Substrate contacts are provided by residues tryptophan 82, arginine 84, arginine 204, and 210–212 (RLS). Glutamate 223 is a Mg(2+) binding site.

The protein belongs to the UPP synthase family. In terms of assembly, homodimer. It depends on Mg(2+) as a cofactor.

In terms of biological role, catalyzes the condensation of isopentenyl diphosphate (IPP) with allylic pyrophosphates generating different type of terpenoids. The chain is Isoprenyl transferase from Clostridium acetobutylicum (strain ATCC 824 / DSM 792 / JCM 1419 / IAM 19013 / LMG 5710 / NBRC 13948 / NRRL B-527 / VKM B-1787 / 2291 / W).